The sequence spans 560 residues: MVTPVTWMDNPIEVYVNDSVWVPGPTDDRCPAKPEEEGMMINISIGYHYPPICLGRAPGCLMPAVQNWLVEVPTVSPNSRFTYHMVSGMSLRPRVNCLQDFSYQRSLKFRPKGKTCPKEIPKGSKNTEVLVWEECVANSVVILQNNEFGTIIDWAPRGQFYHNCSGQTQSCPSAQVSPAVDSDLTESLDKHKHKKLQSFYLWEWEEKGISTPRPKIISPVSGPEHPELWRLTVASHHIRIWSGNQTLETRYRKPFYTIDLNSILTVPLQSCVKPPYMLVVGNIVIKPASQTITCENCRLFTCIDSTFNWQHRILLVRAREGMWIPVSTDRPWEASPSIHILTEILKGVLNRSKRFIFTLIAVIMGLIAVTATAAVAGVALHSSVQSVNFVNYWQKNSTRLWNSQSSIDQKLASQINDLRQTVIWMGDRLMTLEHHFQLQCDWNTSDFCITPQIYNESEHHWDMVRRHLQGREDNLTLDISKLKEQIFEASKAHLNLVPGTEAIAGVADGLANLNPVTWIKTIRSTMIINLILIVVCLFCLLLVCRCTQQLRRDSDIENGP.

The interval 355–375 (FIFTLIAVIMGLIAVTATAAV) is fusion peptide. The helical transmembrane segment at 522-542 (IRSTMIINLILIVVCLFCLLL) threads the bilayer.

Belongs to the beta type-B retroviral envelope protein family. HERV class-II K(HML-2) env subfamily. In terms of assembly, the surface (SU) and transmembrane (TM) proteins form a heterodimer. SU and TM are attached by noncovalent interactions or by a labile interchain disulfide bond. Specific enzymatic cleavages in vivo yield the mature SU and TM proteins. As to expression, expressed at higher level in the thymus. Expressed at lower level in peripheral blood lymphocytes.

It localises to the cell membrane. The protein resides in the virion. Its function is as follows. Retroviral envelope proteins mediate receptor recognition and membrane fusion during early infection. Endogenous envelope proteins may have kept, lost or modified their original function during evolution. This envelope protein has superantigenic properties. Functionally, SU mediates receptor recognition. In terms of biological role, TM anchors the envelope heterodimer to the viral membrane through one transmembrane domain. The other hydrophobic domain, called fusion peptide, mediates fusion of the viral membrane with the target cell membrane. The sequence is that of Endogenous retrovirus group K member 18 Env polyprotein (ERVK-18) from Homo sapiens (Human).